A 70-amino-acid polypeptide reads, in one-letter code: Mu-conotoxin PnIVB (70 aa).

Positions Met1–Ala20 are cleaved as a signal peptide. Positions Val21 to Val51 are excised as a propeptide.

In terms of processing, contains 3 disulfide bonds. They are not added, since framework IV presents two different connectivities (I-V, II-III, IV-VI and I-III, II-V, IV-VI). In terms of tissue distribution, expressed by the venom duct.

The protein resides in the secreted. Mu-conotoxins block voltage-gated sodium channels (Nav). Blocks reversibly sodium channels in molluskan neurons, but has no effect on sodium currents in bovine chromaffin cells or in rat brain synaptosomes. Induces paralysis in bivalve mollusks (Mytilus). No effect are observed on fish (Gambusia) and fly larvae (Sarcophaga). Is approximately 6 times more potent than PnIVA in blockade of the sodium current in Lymnaea neurons. In Conus pennaceus (Feathered cone), this protein is Mu-conotoxin PnIVB.